A 1021-amino-acid chain; its full sequence is Immunoglobulin superfamily member 2 (1021 aa).

Residues 1 to 20 (MAGISYVASFFLLLTKLSIG) form the signal peptide. The Extracellular portion of the chain corresponds to 21-954 (QREVTVQKGP…LPSRICSSAP (934 aa)). 7 Ig-like C2-type domains span residues 22 to 139 (REVT…AKTN), 144 to 265 (PDTL…WMFI), 279 to 389 (PAVK…RTGS), 408 to 525 (PAAR…RDLS), 541 to 651 (LQVS…NSLY), 656 to 794 (PRAS…WHKL), and 808 to 925 (PTGS…KWIN). Intrachain disulfides connect Cys-43–Cys-121 and Cys-168–Cys-249. Residue Asn-44 is glycosylated (N-linked (GlcNAc...) asparagine). The EWI motif motif lies at 253–255 (EWI). Cystine bridges form between Cys-304-Cys-377, Cys-434-Cys-511, Cys-562-Cys-640, Cys-697-Cys-778, and Cys-834-Cys-909. N-linked (GlcNAc...) asparagine glycosylation occurs at Asn-322. Residues 955–975 (LLYFLFICPFVLLLLLLISLL) traverse the membrane as a helical segment. The Cytoplasmic segment spans residues 976–1021 (CLYWKARKLSTLRSNTRKEKALWVDLKEAGGVTTNRREDEEEDEGN).

In terms of processing, N-glycosylated. As to expression, expressed in lung, thymus and small intestine. Detected in cutaneous dendritic cells, activated T-cells, monocytes and granulocytes as well as with epithelial cells with dendritic morphology. Expressed in some leukemic cells, the CD4(+) CD56(+) blastic tumor cells, as well as in Langerhans cells from LCH (Langerhans cell histiocytosis) patients.

The protein resides in the membrane. Plays a role as inhibitor of T-cells proliferation induced by CD3. Inhibits expression of IL2RA on activated T-cells and secretion of IL2. Inhibits tyrosine kinases that are required for IL2 production and cellular proliferation. Inhibits phospholipase C-gamma-1/PLCG1 phosphorylation and subsequent CD3-induced changes in intracellular free calcium. Prevents nuclear translocation of nuclear factor of activated T-cell to the nucleus. Plays a role in the inhibition of T-cell proliferation via IL10 secretion by cutaneous dendritic cells. May be a marker of CD4(+) CD56(+) leukemic tumor cells. The chain is Immunoglobulin superfamily member 2 (CD101) from Homo sapiens (Human).